The chain runs to 309 residues: HPr kinase/phosphorylase (309 aa).

Catalysis depends on residues H138 and K159. Residue 153–160 participates in ATP binding; the sequence is GKSGVGKS. S160 contacts Mg(2+). D177 functions as the Proton acceptor; for phosphorylation activity. Proton donor; for dephosphorylation activity in the catalytic mechanism. Residues 201–210 are important for the catalytic mechanism of both phosphorylation and dephosphorylation; that stretch reads LEIRGLGIIN. A Mg(2+)-binding site is contributed by E202. R243 is an active-site residue. Residues 264 to 269 form an important for the catalytic mechanism of dephosphorylation region; that stretch reads PVRPGR.

It belongs to the HPrK/P family. In terms of assembly, homohexamer. It depends on Mg(2+) as a cofactor.

The catalysed reaction is [HPr protein]-L-serine + ATP = [HPr protein]-O-phospho-L-serine + ADP + H(+). It catalyses the reaction [HPr protein]-O-phospho-L-serine + phosphate + H(+) = [HPr protein]-L-serine + diphosphate. In terms of biological role, catalyzes the ATP- as well as the pyrophosphate-dependent phosphorylation of a specific serine residue in HPr, a phosphocarrier protein of the phosphoenolpyruvate-dependent sugar phosphotransferase system (PTS). HprK/P also catalyzes the pyrophosphate-producing, inorganic phosphate-dependent dephosphorylation (phosphorolysis) of seryl-phosphorylated HPr (P-Ser-HPr). The two antagonistic activities of HprK/P are regulated by several intracellular metabolites, which change their concentration in response to the absence or presence of rapidly metabolisable carbon sources (glucose, fructose, etc.) in the growth medium. Also phosphorylates/dephosphorylates the HPr-like catabolite repression protein crh on a specific serine residue. Therefore, by controlling the phosphorylation state of HPr and crh, HPrK/P is a sensor enzyme that plays a major role in the regulation of carbon metabolism and sugar transport: it mediates carbon catabolite repression (CCR), and regulates PTS-catalyzed carbohydrate uptake and inducer exclusion. The polypeptide is HPr kinase/phosphorylase (Geobacillus thermodenitrificans (strain NG80-2)).